Here is a 228-residue protein sequence, read N- to C-terminus: Ankyrin repeat domain-containing protein 46 (228 aa).

ANK repeat units lie at residues 11–40 (QTNV…DPNI), 44–73 (RGRT…DLLA), 77–103 (QGNT…KIDI), and 107–138 (QGAT…EVKG). Residues 195–215 (VLLLIFVIALLSLGIAYYVSG) form a helical membrane-spanning segment.

Its subcellular location is the membrane. The polypeptide is Ankyrin repeat domain-containing protein 46 (ANKRD46) (Bos taurus (Bovine)).